The following is a 392-amino-acid chain: S-adenosylmethionine synthase (392 aa).

His-22 contributes to the ATP binding site. Residue Asp-24 coordinates Mg(2+). Glu-50 provides a ligand contact to K(+). Glu-63 and Gln-106 together coordinate L-methionine. A flexible loop region spans residues 106–116 (QSPDITQGVTL). ATP is bound by residues 170–172 (DGK), 236–237 (KF), Asp-245, 251–252 (RK), Ala-268, and Lys-272. Asp-245 lines the L-methionine pocket. An L-methionine-binding site is contributed by Lys-276.

This sequence belongs to the AdoMet synthase family. Homotetramer; dimer of dimers. The cofactor is Mg(2+). K(+) serves as cofactor.

It localises to the cytoplasm. It catalyses the reaction L-methionine + ATP + H2O = S-adenosyl-L-methionine + phosphate + diphosphate. Its pathway is amino-acid biosynthesis; S-adenosyl-L-methionine biosynthesis; S-adenosyl-L-methionine from L-methionine: step 1/1. Functionally, catalyzes the formation of S-adenosylmethionine (AdoMet) from methionine and ATP. The overall synthetic reaction is composed of two sequential steps, AdoMet formation and the subsequent tripolyphosphate hydrolysis which occurs prior to release of AdoMet from the enzyme. The protein is S-adenosylmethionine synthase of Sulfurimonas denitrificans (strain ATCC 33889 / DSM 1251) (Thiomicrospira denitrificans (strain ATCC 33889 / DSM 1251)).